The primary structure comprises 114 residues: Mediator of RNA polymerase II transcription subunit 11 (114 aa).

Residues 28–61 (LELSKEKANASLLDRQLNQFQTSINRVESELSSQ) are a coiled coil.

The protein belongs to the Mediator complex subunit 11 family. In terms of assembly, component of the Mediator complex. In terms of tissue distribution, ubiquitously expressed at early stage of development. After fertilization expressed in head region as well as in lateral line primordium.

Its subcellular location is the nucleus. Its function is as follows. Component of the Mediator complex, a coactivator involved in the regulated transcription of nearly all RNA polymerase II-dependent genes. Mediator functions as a bridge to convey information from gene-specific regulatory proteins to the basal RNA polymerase II transcription machinery. Mediator is recruited to promoters by direct interactions with regulatory proteins and serves as a scaffold for the assembly of a functional pre-initiation complex with RNA polymerase II and the general transcription factors. This chain is Mediator of RNA polymerase II transcription subunit 11 (med11), found in Danio rerio (Zebrafish).